Here is a 691-residue protein sequence, read N- to C-terminus: Protein 4.2 (691 aa).

Gly-2 carries the N-myristoyl glycine lipid modification. The tract at residues 31–39 (LTLRRGQSF) is band 3 binding. Ser-248 is modified (phosphoserine). Residue Tyr-570 is modified to Phosphotyrosine.

It belongs to the transglutaminase superfamily. Transglutaminase family. As to quaternary structure, component of the ankyrin-1 complex in the erythrocyte, composed of ANK1, RHCE, RHAG, SLC4A1, EPB42, GYPA, GYPB and AQP1. Interacts with SLC4A1 (via the cytoplasmic domain); this interaction is mediated by the SLC4A1 Band 3-I dimer. Interacts with ANK1 (via ANK 1-13 repeats). Interacts with AQP1 (via the C-terminal).

The protein localises to the cell membrane. The protein resides in the cytoplasm. It is found in the cytoskeleton. Component of the ankyrin-1 complex, a multiprotein complex involved in the stability and shape of the erythrocyte membrane. This Mus musculus (Mouse) protein is Protein 4.2.